We begin with the raw amino-acid sequence, 449 residues long: MAQRLEAKGGKGGNQWDDGADHENVTKIHVRGGLEGIQFIKFEYVKAGQTVVGPIHGVSGKGFTQTFEINHLNGEHVVSVKGCYDNISGVIQALQFETNQRSSEVMGYDDTGTKFTLEISGNKITGFHGSADANLKSLGAYFTPPPPIKQEYQGGTGGSPWDHGIYTGIRKVYVTFSPVSISHIKVDYDKDGKVETRQDGDMLGENRVQGQPNEFVVDYPYEYITSIEVTCDKVSGNTNRVRSLSFKTSKDRTSPTYGRKSERTFVFESKGRALVGLHGRCCWAIDALGAHFGAPPIPPPPPTEKLQGSGGDGGESWDDGAFDGVRKIYVGQGENGIASVKFVYDKNNQLVLGEEHGKHTLLGYEEFELDYPSEYITAVEGYYDKVFGSESSVIVMLKFKTNKRTSPPYGMDAGVSFILGKEGHKVVGFHGKASPELYQIGVTVAPITK.

2 disordered regions span residues Met-1–Ala-20 and Ala-294–Gly-314. At Ala-2 the chain carries N-acetylalanine. 3 Jacalin-type lectin domains span residues Ala-2–Pro-144, Pro-147–Ala-294, and Thr-303–Pro-446.

This sequence belongs to the jacalin lectin family.

This Arabidopsis thaliana (Mouse-ear cress) protein is Jacalin-related lectin 20 (JAL20).